Consider the following 55-residue polypeptide: ATP synthase F(0) complex subunit 8 (55 aa).

Residues 4 to 24 (LLPTPWFTIFIYAWMVLLAVI) traverse the membrane as a helical segment.

It belongs to the ATPase protein 8 family. Component of the ATP synthase complex composed at least of ATP5F1A/subunit alpha, ATP5F1B/subunit beta, ATP5MC1/subunit c (homooctomer), MT-ATP6/subunit a, MT-ATP8/subunit 8, ATP5ME/subunit e, ATP5MF/subunit f, ATP5MG/subunit g, ATP5MK/subunit k, ATP5MJ/subunit j, ATP5F1C/subunit gamma, ATP5F1D/subunit delta, ATP5F1E/subunit epsilon, ATP5PF/subunit F6, ATP5PB/subunit b, ATP5PD/subunit d, ATP5PO/subunit OSCP. ATP synthase complex consists of a soluble F(1) head domain (subunits alpha(3) and beta(3)) - the catalytic core - and a membrane F(0) domain - the membrane proton channel (subunits c, a, 8, e, f, g, k and j). These two domains are linked by a central stalk (subunits gamma, delta, and epsilon) rotating inside the F1 region and a stationary peripheral stalk (subunits F6, b, d, and OSCP).

It is found in the mitochondrion membrane. In terms of biological role, subunit 8, of the mitochondrial membrane ATP synthase complex (F(1)F(0) ATP synthase or Complex V) that produces ATP from ADP in the presence of a proton gradient across the membrane which is generated by electron transport complexes of the respiratory chain. ATP synthase complex consist of a soluble F(1) head domain - the catalytic core - and a membrane F(1) domain - the membrane proton channel. These two domains are linked by a central stalk rotating inside the F(1) region and a stationary peripheral stalk. During catalysis, ATP synthesis in the catalytic domain of F(1) is coupled via a rotary mechanism of the central stalk subunits to proton translocation. In vivo, can only synthesize ATP although its ATP hydrolase activity can be activated artificially in vitro. Part of the complex F(0) domain. The polypeptide is ATP synthase F(0) complex subunit 8 (Dicentrarchus labrax (European seabass)).